The following is a 222-amino-acid chain: Potassium-transporting ATPase KdpC subunit (222 aa).

The chain crosses the membrane as a helical span at residues 13–35; it reads WAGLRSLLVLTVVTGVLYPLAVT. Residues 136-162 are disordered; it reads TADHKVKPSDVPADAVTSSGSGLDPDI.

Belongs to the KdpC family. In terms of assembly, the system is composed of three essential subunits: KdpA, KdpB and KdpC.

Its subcellular location is the cell membrane. Its function is as follows. Part of the high-affinity ATP-driven potassium transport (or Kdp) system, which catalyzes the hydrolysis of ATP coupled with the electrogenic transport of potassium into the cytoplasm. This subunit acts as a catalytic chaperone that increases the ATP-binding affinity of the ATP-hydrolyzing subunit KdpB by the formation of a transient KdpB/KdpC/ATP ternary complex. In Streptomyces avermitilis (strain ATCC 31267 / DSM 46492 / JCM 5070 / NBRC 14893 / NCIMB 12804 / NRRL 8165 / MA-4680), this protein is Potassium-transporting ATPase KdpC subunit.